The following is a 995-amino-acid chain: MPPHGPNSQGGRRGGGHSSGRRGGRGGGGRGGGGGGRGEQRWWDPVWRAERLRQQQAEMEVLDENEWWNKIEQWKTGGEQEMLIKRNFSRGDQQTLSDMALQMGLYFHAYNKGKALVVSKVPLPDYRADLDERHGSTQKEIKMSTETERKLGSLLKTTQESGSSGASASAFNDQQDRTSTLGLKRPDSASKLPDSLEKEKFSFALKERQEKLKATESVKALKAFREKLPAFKMKEEFLNSVSQNQVLVVSGETGCGKTTQLPQFILEEEISSLRGADCNIICTQPRRISAISVASRISAERGESIGESVGYQIRLESKRSDQTRLLFCTTGVLLRRLIEDPNLTNVSHLLVDEIHERGMNEDFLLIILRDLLPRRPDLRLILMSATINADMFSTYFGNSPTMHIPGFTFPVAELFLEDVLEKSRYNIKSSDSGNYQGSSRGRRRESESKKDDLTTLFEDIDINSHYKSYSSATRNSLEAWSGAQIDVDLVEATIEHICRLEGGGAILVFLTGWDEISKLLEKINMNNFLGDSSKFLVLPLHGSMPTVNQREIFDRPPPNKRKIVLATNIAESSITIDDVVYVVDCGKAKETSYDALNKVACLLPSWISKASAHQRRGRAGRVQAGVCYRLYPKVIYDAFPQYQLPEIIRTPLQELCLHIKSLQVGSIGSFLAKALQPPDALAVENAIELLKTIGALNDVEELTPLGRHLCTLPVDPNIGKMLLIGAIFQCVNPALTIAAALAYRSPFVLPLNRKEEADEAKRYFAGDSCSDHIALLKAYEGYRDAKRGGNEKDFCWQNFLSPVTLRMMEDMRNQFLDLLSDIGFVDKSKPNAYNQYSYDMEMISAVLCAGLYPNVVQCKRRGKRTAFYTKELGKVDIHPGSVNARVNLFSLPYLVYSEKVKTTSVYIRDSTNISDYALLMFGGNLIPSKTGEGIEMLGGYLHFSASKNILELIQRLRGEVDKLLNKKIEDPSLDITVEGKGVVSAVVELLRSQKH.

Disordered stretches follow at residues 1–42 (MPPH…EQRW) and 156–192 (KTTQ…ASKL). Over residues 25–37 (RGGGGRGGGGGGR) the composition is skewed to gly residues. Positions 161–170 (SGSSGASASA) are enriched in low complexity. Residues 171–181 (FNDQQDRTSTL) are compositionally biased toward polar residues. In terms of domain architecture, Helicase ATP-binding spans 238–405 (LNSVSQNQVL…FGNSPTMHIP (168 aa)). 251–258 (GETGCGKT) contacts ATP. A DEIH box motif is present at residues 352–355 (DEIH). The disordered stretch occupies residues 429 to 450 (SSDSGNYQGSSRGRRRESESKK). The Helicase C-terminal domain occupies 484 to 663 (QIDVDLVEAT…ELCLHIKSLQ (180 aa)).

The protein belongs to the DExH box helicase family.

The enzyme catalyses ATP + H2O = ADP + phosphate + H(+). The chain is DExH-box ATP-dependent RNA helicase DExH1 from Arabidopsis thaliana (Mouse-ear cress).